The primary structure comprises 105 residues: Large ribosomal subunit protein uL24 (105 aa).

This sequence belongs to the universal ribosomal protein uL24 family. In terms of assembly, part of the 50S ribosomal subunit.

In terms of biological role, one of two assembly initiator proteins, it binds directly to the 5'-end of the 23S rRNA, where it nucleates assembly of the 50S subunit. Its function is as follows. One of the proteins that surrounds the polypeptide exit tunnel on the outside of the subunit. The sequence is that of Large ribosomal subunit protein uL24 from Methylobacterium sp. (strain 4-46).